An 87-amino-acid polypeptide reads, in one-letter code: MAKFNVLDHNLVPEHHIVPEEEEKNILKELNIEKEFLPKISPNDPAIKALEAVHGKIKEGTIIKIVRKSPTMGHSVYYRVVASEVFK.

The protein belongs to the archaeal Rpo5/eukaryotic RPB5 RNA polymerase subunit family. Part of the RNA polymerase complex.

It is found in the cytoplasm. The catalysed reaction is RNA(n) + a ribonucleoside 5'-triphosphate = RNA(n+1) + diphosphate. DNA-dependent RNA polymerase (RNAP) catalyzes the transcription of DNA into RNA using the four ribonucleoside triphosphates as substrates. The protein is DNA-directed RNA polymerase subunit Rpo5 of Thermoplasma acidophilum (strain ATCC 25905 / DSM 1728 / JCM 9062 / NBRC 15155 / AMRC-C165).